We begin with the raw amino-acid sequence, 120 residues long: Large ribosomal subunit protein bL20 (120 aa).

Belongs to the bacterial ribosomal protein bL20 family.

Binds directly to 23S ribosomal RNA and is necessary for the in vitro assembly process of the 50S ribosomal subunit. It is not involved in the protein synthesizing functions of that subunit. In Paracidovorax citrulli (strain AAC00-1) (Acidovorax citrulli), this protein is Large ribosomal subunit protein bL20.